Reading from the N-terminus, the 386-residue chain is 5-hydroxytryptamine receptor 1B (386 aa).

Residues 1–42 (MEEQGIQCAPPPPAASQTGVPLTNLSHNCSADGYIYQDSIAL) are Extracellular-facing. 2 N-linked (GlcNAc...) asparagine glycosylation sites follow: N24 and N28. The helical transmembrane segment at 43–68 (PWKVLLVALLALITLATTLSNAFVIA) threads the bilayer. Topologically, residues 69–82 (TVYRTRKLHTPANY) are cytoplasmic. The chain crosses the membrane as a helical span at residues 83–107 (LIASLAVTDLLVSILVMPISTMYTV). At 108–115 (TGRWTLGQ) the chain is on the extracellular side. A helical membrane pass occupies residues 116 to 141 (VVCDFWLSSDITCCTASIMHLCVIAL). Residues C118 and C195 are joined by a disulfide bond. Ergotamine-binding residues include D125 and T130. The short motif at 142-144 (DRY) is the DRY motif; important for ligand-induced conformation changes and signaling element. At 142-161 (DRYWAITDAVEYSAKRTPKR) the chain is on the cytoplasmic side. Residues 162–180 (AAIMIVLVWVFSISISLPP) form a helical membrane-spanning segment. At 181–201 (FFWRQAKAEEEMLDCFVNTDH) the chain is on the extracellular side. V197 provides a ligand contact to ergotamine. Residues 202–225 (VLYTVYSTVGAFYLPTLLLIALYG) traverse the membrane as a helical segment. Residues 226–311 (RIYVEARSRI…AARERKATKT (86 aa)) lie on the Cytoplasmic side of the membrane. The span at 255–268 (DSPGSTSSVTSINS) shows a compositional bias: polar residues. The interval 255-278 (DSPGSTSSVTSINSRAPDVPSESG) is disordered. The chain crosses the membrane as a helical span at residues 312–333 (LGIILGAFIVCWLPFFIISLVM). Residues 334–343 (PICKDACWFH) are Extracellular-facing. The chain crosses the membrane as a helical span at residues 344 to 366 (MAIFDFFNWLGYLNSLINPIIYT). The NPxxY motif; important for ligand-induced conformation changes and signaling motif lies at 361-365 (NPIIY). Residues 367–386 (MSNEDFKQAFHKLIRFKCAG) are Cytoplasmic-facing. The S-palmitoyl cysteine moiety is linked to residue C384.

Belongs to the G-protein coupled receptor 1 family. In terms of assembly, homodimer. Heterodimer with HTR1D. Post-translationally, phosphorylated. Desensitization of the receptor may be mediated by its phosphorylation. In terms of processing, palmitoylated. In terms of tissue distribution, predominantly expressed in striatum and Purkinje cells.

Its subcellular location is the cell membrane. Its function is as follows. G-protein coupled receptor for 5-hydroxytryptamine (serotonin). Also functions as a receptor for ergot alkaloid derivatives, various anxiolytic and antidepressant drugs and other psychoactive substances, such as lysergic acid diethylamide (LSD). Ligand binding causes a conformation change that triggers signaling via guanine nucleotide-binding proteins (G proteins) and modulates the activity of downstream effectors, such as adenylate cyclase. HTR1B is coupled to G(i)/G(o) G alpha proteins and mediates inhibitory neurotransmission by inhibiting adenylate cyclase activity. Arrestin family members inhibit signaling via G proteins and mediate activation of alternative signaling pathways. Regulates the release of 5-hydroxytryptamine, dopamine and acetylcholine in the brain, and thereby affects neural activity, nociceptive processing, pain perception, mood and behavior. Besides, plays a role in vasoconstriction of cerebral arteries. The polypeptide is 5-hydroxytryptamine receptor 1B (Htr1b) (Mus musculus (Mouse)).